Here is a 407-residue protein sequence, read N- to C-terminus: Vancomycin aglycone glucosyltransferase (407 aa).

The protein belongs to the glycosyltransferase 28 family.

It catalyses the reaction vancomycin aglycone + UDP-alpha-D-glucose = devancoaminyl-vancomycin + UDP. It participates in antibiotic biosynthesis; vancomycin biosynthesis. Functionally, glucosyltransferase that transfers glucose to the 4-OH-Phegly(4) residue of vancomycin aglycone (AGV) to produce devancoaminyl-vancomycin (DVV) in the biosynthesis of glycopeptide antibiotic chloroeremomycin, a member of the vancomycin group of antibiotics. This Amycolatopsis orientalis (Nocardia orientalis) protein is Vancomycin aglycone glucosyltransferase (gtfB).